The chain runs to 629 residues: MGLPKGPEGQGLPEVETREDEEQNVKLTEILELLVAAGYFRARIKGLSPFDKVVGGMTWCITTCSFDVDVDLLFQENSTIGQKIALSEKIVSVLPRMKCPHQLEPHQIQGMDFIHIFPVVQWLVKRAIETKEEMGDYIRSYSISQFQKTYSLPEDDDFIKRKDKAVKTVVGLSDAYKPRRKYRRQRGAEELPDEESRVHSTLLEYGRRYGFSRQSKTEKAEDKKTALAAGLSAAEKVDAHEEDELQAAEEQRIQSLMTKMTAMANEESRLTASSVGQIVGLCSEEIKQIVSEYAGKQSELSAEESPEKLGTSQLHQRKVISLNKQILQKSKHLEELQANHTSLKAKYSDRKKTLTELKDHGEKLDKEQAALEKLEAKADPSMLQNLRALVAMNESLKSQEQEFKAHCREEMARLQQEIETLKAERAPGEKIISGGEPQGALTSTMTHNEDLDRRYNMEKEKLYKIRLLQARRNREIAILHRKIDEVPSRAELIQYQKRFIELYRQISAVHKETKQFFTLYNTLDDKKVYLEKEISLLNSIHENFSQAMASPAARDQFLRQMEQIVEGIKQSRMKMEKKKQENKMRRDQLNDQYLELLEKQRLYFKTVKEFKEEGRKNELLLSKIKAKAS.

The tract at residues 1 to 23 (MGLPKGPEGQGLPEVETREDEEQ) is disordered. The sufficient for interaction with CCDC22 stretch occupies residues 1 to 428 (MGLPKGPEGQ…ETLKAERAPG (428 aa)). Coiled-coil stretches lie at residues 231–430 (LSAA…PGEK) and 558–599 (LRQM…LLEK). Ser-298, Ser-301, and Ser-305 each carry phosphoserine. The interval 446 to 629 (THNEDLDRRY…LLSKIKAKAS (184 aa)) is sufficient for interaction with WASHC2C.

It belongs to the CCDC93 family. As to quaternary structure, component of the commander complex consisting of the CCC subcomplex and the retriever subcomplex. Component of the CCC (COMMD/CCDC22/CCDC93) subcomplex consisting of COMMD1, COMMD2, COMMD3, COMMD4, COMMD5, COMMD6, COMMD7, COMMD8, COMMD9, COMMD10, CCDC22 and CCDC93. Forms a coiled-coil heterodimer with CCDC22; this heterodimer interacts with the guanine nucleotide exchange factor DENND10; the interaction is direct. Interacts with WASHC1. Interacts directly with WASHC2C. Interacts with SNX17 and SNX31.

The protein localises to the early endosome. Functionally, component of the commander complex that is essential for endosomal recycling of transmembrane cargos; the commander complex is composed of composed of the CCC subcomplex and the retriever subcomplex. Component of the CCC complex, which is involved in the regulation of endosomal recycling of surface proteins, including integrins, signaling receptor and channels. The CCC complex associates with SNX17, retriever and WASH complexes to prevent lysosomal degradation and promote cell surface recycling of numerous cargos such as integrins ITGA5:ITGB1. Involved in copper-dependent ATP7A trafficking between the trans-Golgi network and vesicles in the cell periphery; the function is proposed to depend on its association within the CCC complex and cooperation with the WASH complex on early endosomes and is dependent on its interaction with WASHC2C. This chain is Coiled-coil domain-containing protein 93 (Ccdc93), found in Mus musculus (Mouse).